An 813-amino-acid chain; its full sequence is Protein translocase subunit SecA 2 (813 aa).

Residues Gln-105, 123–127, and Asp-525 each bind ATP; that span reads GEGKT.

The protein belongs to the SecA family. As to quaternary structure, monomer and homodimer. Part of the essential Sec protein translocation apparatus which comprises SecA, SecYEG and auxiliary proteins SecDF-YajC and YidC.

The protein resides in the cell inner membrane. It is found in the cytoplasm. It carries out the reaction ATP + H2O + cellular proteinSide 1 = ADP + phosphate + cellular proteinSide 2.. Functionally, part of the Sec protein translocase complex. Interacts with the SecYEG preprotein conducting channel. Has a central role in coupling the hydrolysis of ATP to the transfer of proteins into and across the cell membrane, serving both as a receptor for the preprotein-SecB complex and as an ATP-driven molecular motor driving the stepwise translocation of polypeptide chains across the membrane. This Rhodopseudomonas palustris (strain BisA53) protein is Protein translocase subunit SecA 2.